Here is a 270-residue protein sequence, read N- to C-terminus: Interleukin-1 alpha (270 aa).

Residues 1 to 112 constitute a propeptide that is removed on maturation; the sequence is MAKVPDLFED…EVEEEIMKPR (112 aa). The residue at position 82 (lysine 82) is an N6-acetyllysine. The segment at 82–86 is nuclear localization signal (NLS); the sequence is KKRRL. Serine 87 carries the phosphoserine modification. An N-linked (GlcNAc...) asparagine glycan is attached at asparagine 139.

Belongs to the IL-1 family. In terms of assembly, monomer. Interacts with TMED10; the interaction mediates the translocation from the cytoplasm into the ERGIC (endoplasmic reticulum-Golgi intermediate compartment) and thereby secretion. Interacts with IL1R1. Interacts with S100A13; this interaction is the first step in the export of IL1A, followed by direct translocation of this complex across the plasma membrane. In terms of processing, acetylated within its nuclear localization sequence, which impacts subcellular localization. Post-translationally, proteolytic processed by CAPN1 in a calcium-dependent manner. Cleavage from 31 kDa precursor to 18 kDa biologically active molecules. Phosphorylated. Phosphorylation greatly enhances susceptibility to digestion and promotes the conversion of pre-IL1A alpha to the biologically active IL1A.

It localises to the nucleus. It is found in the cytoplasm. Its subcellular location is the secreted. In terms of biological role, cytokine constitutively present intracellularly in nearly all resting non-hematopoietic cells that plays an important role in inflammation and bridges the innate and adaptive immune systems. After binding to its receptor IL1R1 together with its accessory protein IL1RAP, forms the high affinity interleukin-1 receptor complex. Signaling involves the recruitment of adapter molecules such as MYD88, IRAK1 or IRAK4. In turn, mediates the activation of NF-kappa-B and the three MAPK pathways p38, p42/p44 and JNK pathways. Within the cell, acts as an alarmin and cell death results in its liberation in the extracellular space after disruption of the cell membrane to induce inflammation and alert the host to injury or damage. In addition to its role as a danger signal, which occurs when the cytokine is passively released by cell necrosis, directly senses DNA damage and acts as signal for genotoxic stress without loss of cell integrity. The sequence is that of Interleukin-1 alpha (IL1A) from Felis catus (Cat).